The primary structure comprises 324 residues: Acetyl-coenzyme A carboxylase carboxyl transferase subunit alpha (324 aa).

In terms of domain architecture, CoA carboxyltransferase C-terminal spans 37 to 291 (ILEDKLENLE…NVVLQKTFEQ (255 aa)).

The protein belongs to the AccA family. As to quaternary structure, acetyl-CoA carboxylase is a heterohexamer composed of biotin carboxyl carrier protein (AccB), biotin carboxylase (AccC) and two subunits each of ACCase subunit alpha (AccA) and ACCase subunit beta (AccD).

The protein resides in the cytoplasm. It carries out the reaction N(6)-carboxybiotinyl-L-lysyl-[protein] + acetyl-CoA = N(6)-biotinyl-L-lysyl-[protein] + malonyl-CoA. It functions in the pathway lipid metabolism; malonyl-CoA biosynthesis; malonyl-CoA from acetyl-CoA: step 1/1. Its function is as follows. Component of the acetyl coenzyme A carboxylase (ACC) complex. First, biotin carboxylase catalyzes the carboxylation of biotin on its carrier protein (BCCP) and then the CO(2) group is transferred by the carboxyltransferase to acetyl-CoA to form malonyl-CoA. This Bacillus cytotoxicus (strain DSM 22905 / CIP 110041 / 391-98 / NVH 391-98) protein is Acetyl-coenzyme A carboxylase carboxyl transferase subunit alpha.